A 242-amino-acid polypeptide reads, in one-letter code: Biosynthetic peptidoglycan transglycosylase (242 aa).

The chain crosses the membrane as a helical span at residues 19-39 (LMVVLAVFWGGGIALFSVAPV).

It belongs to the glycosyltransferase 51 family.

The protein resides in the cell inner membrane. It carries out the reaction [GlcNAc-(1-&gt;4)-Mur2Ac(oyl-L-Ala-gamma-D-Glu-L-Lys-D-Ala-D-Ala)](n)-di-trans,octa-cis-undecaprenyl diphosphate + beta-D-GlcNAc-(1-&gt;4)-Mur2Ac(oyl-L-Ala-gamma-D-Glu-L-Lys-D-Ala-D-Ala)-di-trans,octa-cis-undecaprenyl diphosphate = [GlcNAc-(1-&gt;4)-Mur2Ac(oyl-L-Ala-gamma-D-Glu-L-Lys-D-Ala-D-Ala)](n+1)-di-trans,octa-cis-undecaprenyl diphosphate + di-trans,octa-cis-undecaprenyl diphosphate + H(+). Its pathway is cell wall biogenesis; peptidoglycan biosynthesis. Functionally, peptidoglycan polymerase that catalyzes glycan chain elongation from lipid-linked precursors. This chain is Biosynthetic peptidoglycan transglycosylase, found in Escherichia coli O17:K52:H18 (strain UMN026 / ExPEC).